Reading from the N-terminus, the 305-residue chain is Homoserine kinase (305 aa).

Residue 95 to 105 (PHGRGLGSSSA) participates in ATP binding.

The protein belongs to the GHMP kinase family. Homoserine kinase subfamily.

The protein localises to the cytoplasm. It carries out the reaction L-homoserine + ATP = O-phospho-L-homoserine + ADP + H(+). The protein operates within amino-acid biosynthesis; L-threonine biosynthesis; L-threonine from L-aspartate: step 4/5. Functionally, catalyzes the ATP-dependent phosphorylation of L-homoserine to L-homoserine phosphate. This is Homoserine kinase from Streptomyces avermitilis (strain ATCC 31267 / DSM 46492 / JCM 5070 / NBRC 14893 / NCIMB 12804 / NRRL 8165 / MA-4680).